Reading from the N-terminus, the 337-residue chain is Putative 4-hydroxythreonine-4-phosphate dehydrogenase 2 (337 aa).

3 residues coordinate a divalent metal cation: H173, H217, and H274.

Belongs to the PdxA family. Homodimer. Requires Zn(2+) as cofactor. Mg(2+) serves as cofactor. Co(2+) is required as a cofactor.

The protein resides in the cytoplasm. It catalyses the reaction 4-(phosphooxy)-L-threonine + NAD(+) = 3-amino-2-oxopropyl phosphate + CO2 + NADH. It functions in the pathway cofactor biosynthesis; pyridoxine 5'-phosphate biosynthesis; pyridoxine 5'-phosphate from D-erythrose 4-phosphate: step 4/5. Functionally, catalyzes the NAD(P)-dependent oxidation of 4-(phosphooxy)-L-threonine (HTP) into 2-amino-3-oxo-4-(phosphooxy)butyric acid which spontaneously decarboxylates to form 3-amino-2-oxopropyl phosphate (AHAP). This chain is Putative 4-hydroxythreonine-4-phosphate dehydrogenase 2, found in Pseudomonas aeruginosa (strain ATCC 15692 / DSM 22644 / CIP 104116 / JCM 14847 / LMG 12228 / 1C / PRS 101 / PAO1).